A 915-amino-acid chain; its full sequence is Coiled-coil domain-containing protein 57 (915 aa).

A centrosomal targeting domain region spans residues 1–502 (MLPLGSEPAL…MHGLPRPGAQ (502 aa)). Coiled-coil stretches lie at residues 92–173 (VSEL…QRQE), 214–422 (LEAL…LERD), 456–483 (KSQVAAKLQETEQALQEQEVVLKAVTLE), and 521–548 (IQRLREQNTSLRNAIAQMRKEMEALSHQ). 3 disordered regions span residues 555–574 (TAAESTDANQPDPEAGGDAA), 606–653 (PLKM…QAGP), and 724–915 (QHGG…NIMD). The segment at 606–915 (PLKMSSPHAE…PKIRNYNIMD (310 aa)) is microtubule binding domain. A compositionally biased stretch (polar residues) spans 613–627 (HAESQPSVRTSTETT). Low complexity predominate over residues 628-652 (GGSAQAGQAGGSVQAGQAGGSVQAG). The segment covering 745–758 (GREDAKSAEDEAPS) has biased composition (basic and acidic residues). 3 stretches are compositionally biased toward polar residues: residues 781–794 (PKTQHSIHTVTCKS), 819–830 (SHSSSSFASGTL), and 841–852 (SSPSGVTSQGDS). Residues 879-891 (KTAAQAKAKTTGA) show a composition bias toward low complexity.

In terms of assembly, interacts with CEP63; the interaction is required for their location to proximal end of centrioles. Interacts with microtubules.

The protein resides in the cytoplasm. Its subcellular location is the cytoskeleton. The protein localises to the microtubule organizing center. It localises to the centrosome. It is found in the centriolar satellite. The protein resides in the centriole. Its subcellular location is the spindle. Functionally, pleiotropic regulator of centriole duplication, mitosis, and ciliogenesis. Critical interface between centrosome and microtubule-mediated cellular processes. Centriole duplication protein required for recruitment of CEP63, CEP152, and PLK4 to the centrosome. Independent of its centrosomal targeting, localizes to and interacts with microtubules and regulates microtubule nucleation, stability, and mitotic progression. This is Coiled-coil domain-containing protein 57 from Homo sapiens (Human).